The primary structure comprises 199 residues: Probable GTP-binding protein EngB (199 aa).

Residues 28–199 form the EngB-type G domain; that stretch reads DLPEVALAGR…EAWDTILAEL (172 aa). Residues 36–43, 63–67, 81–84, 148–151, and 180–182 each bind GTP; these read GRSNVGKS, GKTQL, DVPG, TKAD, and FSS. Residues serine 43 and threonine 65 each coordinate Mg(2+).

Belongs to the TRAFAC class TrmE-Era-EngA-EngB-Septin-like GTPase superfamily. EngB GTPase family. It depends on Mg(2+) as a cofactor.

Its function is as follows. Necessary for normal cell division and for the maintenance of normal septation. The protein is Probable GTP-binding protein EngB of Streptococcus thermophilus (strain CNRZ 1066).